The following is a 287-amino-acid chain: Anthocyanidin 3-O-glucosyltransferase 7 (287 aa).

UDP-alpha-D-glucose-binding residues include alanine 162, glutamine 164, histidine 179, tryptophan 182, asparagine 183, serine 184, and glutamate 187. Glycine 202 contributes to the an anthocyanidin binding site. UDP-alpha-D-glucose contacts are provided by aspartate 203 and glutamine 204.

This sequence belongs to the UDP-glycosyltransferase family. As to expression, expressed in cotyledons, hypocotyls, roots and leaves.

It carries out the reaction an anthocyanidin + UDP-alpha-D-glucose + H(+) = an anthocyanidin 3-O-beta-D-glucoside + UDP. It functions in the pathway pigment biosynthesis; anthocyanin biosynthesis. In terms of biological role, in the presence of other necessary color factors, this glycosylation reaction allows the accumulation of anthocyanin pigments. The sequence is that of Anthocyanidin 3-O-glucosyltransferase 7 (GT7) from Manihot esculenta (Cassava).